A 130-amino-acid chain; its full sequence is Holo-[acyl-carrier-protein] synthase (130 aa).

Mg(2+) is bound by residues Asp-9 and Glu-58.

This sequence belongs to the P-Pant transferase superfamily. AcpS family. It depends on Mg(2+) as a cofactor.

It localises to the cytoplasm. It carries out the reaction apo-[ACP] + CoA = holo-[ACP] + adenosine 3',5'-bisphosphate + H(+). In terms of biological role, transfers the 4'-phosphopantetheine moiety from coenzyme A to a Ser of acyl-carrier-protein. The polypeptide is Holo-[acyl-carrier-protein] synthase (Mycobacterium marinum (strain ATCC BAA-535 / M)).